Reading from the N-terminus, the 730-residue chain is Transcription factor verF (730 aa).

The segment at 19 to 41 (YECSLCLKRYKRREHLFRHIGSH) adopts a C2H2-type 1 zinc-finger fold. The C2H2-type 2; atypical zinc finger occupies 47-69 (YQCNSCDGAFQRADVLKRHLRTC). Residues 83-109 (CDRCVRQKKACSSHQPCHSCAKKGAQC) constitute a DNA-binding region (zn(2)-C6 fungal-type). Positions 120–129 (RLSQHSSTNH) are enriched in polar residues. The disordered stretch occupies residues 120-151 (RLSQHSSTNHTPKDQELSTQFTNPPPPPSTST).

It localises to the nucleus. Transcription factor; part of the gene cluster that mediates the biosynthesis of the neurotoxin verrucosidin, a methylated alpha-pyrone polyketide that inhibits oxidative phosphorylation in mitochondria and thereby causes neurological diseases. The chain is Transcription factor verF from Penicillium polonicum.